Consider the following 410-residue polypeptide: Lissencephaly-1 homolog A (410 aa).

Residues 7–39 (QRDELNRAIADYLRSNGYEEAYSVFKKEAELDM) form the LisH domain. Residues 56–83 (TSVIRLQKKVMELESKLNEAKEEINIGG) are a coiled coil. WD repeat units follow at residues 106-145 (GHRSPVTRVIFHPVFSVIVSASEDATIKVWDHETGDFERT), 148-187 (GHTDSVQDISFDHTGKLLASCSADMTIKLWDFQGFECIRT), 190-229 (GHDHNVSSVAIMPNGDHIVSASRDKTIKMWEVATGYCVKT), 232-271 (GHREWVRMVRPNQDGTLIASSSNDQTVRVWVVATKECKAE), 274-333 (EHEH…CLMT), 336-375 (GHDNWVRGVLVHPGGKYIVSCADDKTLRIWDYKNKRCTKT), and 378-410 (AHEHFVTSLDFHKTAPYVVTGSVDQTVKVWECR).

Belongs to the WD repeat LIS1/nudF family. In terms of assembly, can self-associate. Component of the cytosolic PAF-AH (I) heterotetrameric enzyme, which is composed of PAFAH1B1 (beta), PAFAH1B2 (alpha2) and PAFAH1B3 (alpha1) subunits. The catalytic activity of the enzyme resides in the alpha1 (PAFAH1B3) and alpha2 (PAFAH1B2) subunits, whereas the beta subunit (PAFAH1B1) has regulatory activity. Trimer formation is not essential for the catalytic activity. Interacts with dynein, dynactin, nde1 and ndel1.

Its subcellular location is the cytoplasm. It localises to the cytoskeleton. It is found in the microtubule organizing center. The protein resides in the centrosome. Functionally, regulatory subunit (beta subunit) of the cytosolic type I platelet-activating factor (PAF) acetylhydrolase (PAF-AH (I)), an enzyme that catalyzes the hydrolyze of the acetyl group at the sn-2 position of PAF and its analogs and participates in PAF inactivation. Regulates the PAF-AH (I) activity in a catalytic dimer composition-dependent manner. Positively regulates the activity of the minus-end directed microtubule motor protein dynein. May enhance dynein-mediated microtubule sliding by targeting dynein to the microtubule plus end. Required for several dynein- and microtubule-dependent processes such as the maintenance of Golgi integrity, the peripheral transport of microtubule fragments and the coupling of the nucleus and centrosome. May be required for proliferation of neuronal precursors and neuronal migration. The sequence is that of Lissencephaly-1 homolog A (pafah1b1a) from Danio rerio (Zebrafish).